A 306-amino-acid chain; its full sequence is [methyl-Co(III) glycine betaine-specific corrinoid protein]--tetrahydrofolate methyltransferase (306 aa).

This sequence belongs to the MtrH family.

The enzyme catalyses methyl-Co(III)-[glycine betaine-specific corrinoid protein] + (6S)-5,6,7,8-tetrahydrofolate = Co(I)-[glycine betaine-specific corrinoid protein] + (6S)-5-methyl-5,6,7,8-tetrahydrofolate + H(+). Its function is as follows. Methyltransferase able to catalyze the transfer of a methyl group from methylcobalamin (methylCbl) to tetrahydrofolate (THF) in vitro, to generate methyl-THF and cob(I)alamin. In vivo, the methyl group probably comes from the adjacently encoded methylated corrinoid protein DSY3155. The methyl group may then be ultimately converted to carbon dioxide, and its oxidation would also provide reducing equivalents for anaerobic respiration. Thus, may function in the pathway that allows anaerobic methylotrophic growth of D.hafniense using glycine betaine. The protein is [methyl-Co(III) glycine betaine-specific corrinoid protein]--tetrahydrofolate methyltransferase of Desulfitobacterium hafniense (strain Y51).